Here is a 577-residue protein sequence, read N- to C-terminus: Guanine nucleotide-binding protein-like 3-like protein (577 aa).

Residues 1–30 (MMKIRHKNKKPGKGSKGCKKPARQNGKKVT) are compositionally biased toward basic residues. The tract at residues 1 to 75 (MMKIRHKNKK…VAREQERQRH (75 aa)) is disordered. Residues 9-28 (KKPGKGSKGCKKPARQNGKK) form a required for nucleolar localization region. Residues 42–75 (GNDHASREAELKKKRVEEMREKQQVAREQERQRH) show a composition bias toward basic and acidic residues. A coiled-coil region spans residues 43 to 103 (NDHASREAEL…QKEEVLQELN (61 aa)). One can recognise a CP-type G domain in the interval 118-304 (YKEFRKVVEY…LLDAPGIVPG (187 aa)). Residues 166–169 (NKID), 253–260 (GLPNVGKS), and 297–300 (DAPG) contribute to the GTP site.

Belongs to the TRAFAC class YlqF/YawG GTPase family. Interacts with MDM2; this interaction, which occurs in the nucleoplasm, stabilizes MDM2. Indirectly interacts with TP53, via MDM2-binding. Interacts with TERF1; this interaction probably occurs in the nucleoplasm and is increased during mitosis, when the nucleolus is disassembled. This binding may promote TERF1 homodimerization. Interacts with TERT.

The protein localises to the nucleus. It is found in the nucleolus. Its function is as follows. Stabilizes TERF1 telomeric association by preventing TERF1 recruitment by PML. Stabilizes TERF1 protein by preventing its ubiquitination and hence proteasomal degradation. Does so by interfering with TERF1-binding to FBXO4 E3 ubiquitin-protein ligase. Required for cell proliferation. By stabilizing TRF1 protein during mitosis, promotes metaphase-to-anaphase transition. Stabilizes MDM2 protein by preventing its ubiquitination, and hence proteasomal degradation. By acting on MDM2, may affect TP53 activity. Required for normal processing of ribosomal pre-rRNA. Binds GTP. This is Guanine nucleotide-binding protein-like 3-like protein (Gnl3l) from Mus musculus (Mouse).